A 396-amino-acid chain; its full sequence is Acetyl-CoA acetyltransferase ERG10, cytosolic (396 aa).

Catalysis depends on Cys-91, which acts as the Acyl-thioester intermediate. Tyr-186 provides a ligand contact to K(+). CoA contacts are provided by Asn-227 and Lys-230. Positions 246, 247, and 347 each coordinate K(+). Active-site proton acceptor residues include His-351 and Cys-381. Asn-382 provides a ligand contact to chloride.

It belongs to the thiolase-like superfamily. Thiolase family. Homotetramer. Requires K(+) as cofactor.

It is found in the cytoplasm. It localises to the cytosol. It catalyses the reaction 2 acetyl-CoA = acetoacetyl-CoA + CoA. Its pathway is metabolic intermediate biosynthesis; (R)-mevalonate biosynthesis; (R)-mevalonate from acetyl-CoA: step 1/3. In terms of biological role, acetyl-CoA acetyltransferase; part of the first module of ergosterol biosynthesis pathway that includes the early steps of the pathway, conserved across all eukaryotes, and which results in the formation of mevalonate from acetyl-coenzyme A (acetyl-CoA). ERG10B catalyzes the formation of acetoacetyl-CoA from acetyl-CoA. The first module starts with the action of the cytosolic acetyl-CoA acetyltransferase ERG10B that catalyzes the formation of acetoacetyl-CoA. The hydroxymethylglutaryl-CoA synthases ERG13 then condenses acetyl-CoA with acetoacetyl-CoA to form HMG-CoA. The rate-limiting step of the early module is the reduction to mevalonate by the 3-hydroxy-3-methylglutaryl-coenzyme A (HMG-CoA) reductases HMG1. This is Acetyl-CoA acetyltransferase ERG10, cytosolic from Gibberella zeae (strain ATCC MYA-4620 / CBS 123657 / FGSC 9075 / NRRL 31084 / PH-1) (Wheat head blight fungus).